The chain runs to 323 residues: Beta-ketoacyl-[acyl-carrier-protein] synthase III (323 aa).

Active-site residues include Cys113 and His250. The tract at residues 251-255 (QANKR) is ACP-binding. Asn280 is an active-site residue.

It belongs to the thiolase-like superfamily. FabH family. Homodimer.

The protein resides in the cytoplasm. It catalyses the reaction malonyl-[ACP] + acetyl-CoA + H(+) = 3-oxobutanoyl-[ACP] + CO2 + CoA. It functions in the pathway lipid metabolism; fatty acid biosynthesis. In terms of biological role, catalyzes the condensation reaction of fatty acid synthesis by the addition to an acyl acceptor of two carbons from malonyl-ACP. Catalyzes the first condensation reaction which initiates fatty acid synthesis and may therefore play a role in governing the total rate of fatty acid production. Possesses both acetoacetyl-ACP synthase and acetyl transacylase activities. Its substrate specificity determines the biosynthesis of branched-chain and/or straight-chain of fatty acids. This Brucella anthropi (strain ATCC 49188 / DSM 6882 / CCUG 24695 / JCM 21032 / LMG 3331 / NBRC 15819 / NCTC 12168 / Alc 37) (Ochrobactrum anthropi) protein is Beta-ketoacyl-[acyl-carrier-protein] synthase III.